Consider the following 184-residue polypeptide: Ribosome-recycling factor (184 aa).

Belongs to the RRF family.

Its subcellular location is the cytoplasm. Its function is as follows. Responsible for the release of ribosomes from messenger RNA at the termination of protein biosynthesis. May increase the efficiency of translation by recycling ribosomes from one round of translation to another. This is Ribosome-recycling factor from Psychrobacter sp. (strain PRwf-1).